The sequence spans 81 residues: Sec-independent protein translocase protein TatA (81 aa).

Residues 1 to 21 (MGGLQPWHWVIVIAVFVLLFG) form a helical membrane-spanning segment. The segment covering 46 to 56 (MQAESKGDEPK) has biased composition (basic and acidic residues). Residues 46–81 (MQAESKGDEPKPATPIASERVDTTAPEQQSTDRHTA) form a disordered region.

Belongs to the TatA/E family. As to quaternary structure, the Tat system comprises two distinct complexes: a TatABC complex, containing multiple copies of TatA, TatB and TatC subunits, and a separate TatA complex, containing only TatA subunits. Substrates initially bind to the TatABC complex, which probably triggers association of the separate TatA complex to form the active translocon.

The protein resides in the cell membrane. Functionally, part of the twin-arginine translocation (Tat) system that transports large folded proteins containing a characteristic twin-arginine motif in their signal peptide across membranes. TatA could form the protein-conducting channel of the Tat system. This chain is Sec-independent protein translocase protein TatA, found in Mycolicibacterium smegmatis (strain ATCC 700084 / mc(2)155) (Mycobacterium smegmatis).